Reading from the N-terminus, the 396-residue chain is Tyrosine--tRNA ligase (396 aa).

Tyr36 is a binding site for L-tyrosine. The short motif at 41 to 50 is the 'HIGH' region element; the sequence is PTANSLHIGN. 2 residues coordinate L-tyrosine: Tyr165 and Gln169. The 'KMSKS' region signature appears at 225-229; it reads KMGKT. Residue Lys228 participates in ATP binding. An S4 RNA-binding domain is found at 331–394; it reads TNLIDYLVET…KKSFLTIKTV (64 aa).

This sequence belongs to the class-I aminoacyl-tRNA synthetase family. TyrS type 1 subfamily. In terms of assembly, homodimer.

It localises to the cytoplasm. The catalysed reaction is tRNA(Tyr) + L-tyrosine + ATP = L-tyrosyl-tRNA(Tyr) + AMP + diphosphate + H(+). Its function is as follows. Catalyzes the attachment of tyrosine to tRNA(Tyr) in a two-step reaction: tyrosine is first activated by ATP to form Tyr-AMP and then transferred to the acceptor end of tRNA(Tyr). The polypeptide is Tyrosine--tRNA ligase (Mycoplasma genitalium (strain ATCC 33530 / DSM 19775 / NCTC 10195 / G37) (Mycoplasmoides genitalium)).